The following is a 173-amino-acid chain: RNA pyrophosphohydrolase (173 aa).

The Nudix hydrolase domain occupies 6–149 (GFRANVGIII…KRDVYRKVMK (144 aa)). The Nudix box motif lies at 38-59 (GGVDEGESAEEAMYRELYEEVG).

Belongs to the Nudix hydrolase family. RppH subfamily. It depends on a divalent metal cation as a cofactor.

Its function is as follows. Accelerates the degradation of transcripts by removing pyrophosphate from the 5'-end of triphosphorylated RNA, leading to a more labile monophosphorylated state that can stimulate subsequent ribonuclease cleavage. The sequence is that of RNA pyrophosphohydrolase from Shewanella piezotolerans (strain WP3 / JCM 13877).